The sequence spans 198 residues: Glycerol-3-phosphate acyltransferase 2 (198 aa).

4 helical membrane passes run 4–24, 71–91, 113–133, and 147–167; these read TYLL…LVVG, LPII…AVLG, LLCY…SLLF, and VVAV…AMCL.

This sequence belongs to the PlsY family. In terms of assembly, probably interacts with PlsX.

It is found in the cell membrane. It catalyses the reaction an acyl phosphate + sn-glycerol 3-phosphate = a 1-acyl-sn-glycero-3-phosphate + phosphate. It functions in the pathway lipid metabolism; phospholipid metabolism. Functionally, catalyzes the transfer of an acyl group from acyl-phosphate (acyl-PO(4)) to glycerol-3-phosphate (G3P) to form lysophosphatidic acid (LPA). This enzyme utilizes acyl-phosphate as fatty acyl donor, but not acyl-CoA or acyl-ACP. In Bacillus cereus (strain ATCC 10987 / NRS 248), this protein is Glycerol-3-phosphate acyltransferase 2.